Consider the following 100-residue polypeptide: NADH-quinone oxidoreductase subunit K (100 aa).

Transmembrane regions (helical) follow at residues 4–24 (FEYYVALSGLLMVLGFIGVII), 28–48 (IIAMLLSTELMLNAVNIAFVA), and 61–81 (FVFFILTIAAAEAAIGLGLII).

Belongs to the complex I subunit 4L family. NDH-1 is composed of 14 different subunits. Subunits NuoA, H, J, K, L, M, N constitute the membrane sector of the complex.

It is found in the cell inner membrane. The enzyme catalyses a quinone + NADH + 5 H(+)(in) = a quinol + NAD(+) + 4 H(+)(out). Functionally, NDH-1 shuttles electrons from NADH, via FMN and iron-sulfur (Fe-S) centers, to quinones in the respiratory chain. The immediate electron acceptor for the enzyme in this species is believed to be ubiquinone. Couples the redox reaction to proton translocation (for every two electrons transferred, four hydrogen ions are translocated across the cytoplasmic membrane), and thus conserves the redox energy in a proton gradient. This chain is NADH-quinone oxidoreductase subunit K, found in Sulfurihydrogenibium sp. (strain YO3AOP1).